The following is a 625-amino-acid chain: Branchpoint-bridging protein (625 aa).

The span at 1 to 16 shows a compositional bias: polar residues; sequence MSWRSNAQRTGMNAQP. 2 disordered regions span residues 1-154 and 177-206; these read MSWR…AIGA and LRSG…RTNT. A compositionally biased stretch (gly residues) spans 22–31; it reads RWGGAGGAGE. Low complexity-rich tracts occupy residues 32–61, 70–91, and 110–130; these read GPSS…SQPY, SSSS…AVAA, and SYAA…GADA. The span at 177 to 190 shows a compositional bias: basic and acidic residues; it reads LRSGDFVPPDRERS. In terms of domain architecture, KH spans 253–330; the sequence is YLPIKEFPEI…ASVKKCIKLI (78 aa). 2 consecutive CCHC-type zinc fingers follow at residues 368–385 and 393–410; these read QLCK…ECPE and IICH…DCTQ. Residues 466–533 are disordered; it reads GPDGKKIPPW…HAYHQQQQAY (68 aa). Residues 488-503 show a composition bias toward gly residues; the sequence is APRGGDAGRGGWGHRG. Over residues 516 to 533 the composition is skewed to low complexity; that stretch reads QHQQQQHPHAYHQQQQAY.

It belongs to the BBP/SF1 family.

Its subcellular location is the nucleus. Its function is as follows. Necessary for the splicing of pre-mRNA. Has a role in the recognition of the branch site (5'-UACUAAC-3'), the pyrimidine tract and the 3'-splice site at the 3'-end of introns. In Mycosarcoma maydis (Corn smut fungus), this protein is Branchpoint-bridging protein (BBP).